A 102-amino-acid chain; its full sequence is NADH-quinone oxidoreductase subunit K (102 aa).

Transmembrane regions (helical) follow at residues 5-25 (LAHY…GIFL), 31-51 (IILL…FVAF), and 62-82 (VFVF…LAIL).

Belongs to the complex I subunit 4L family. NDH-1 is composed of 14 different subunits. Subunits NuoA, H, J, K, L, M, N constitute the membrane sector of the complex.

It is found in the cell inner membrane. The enzyme catalyses a quinone + NADH + 5 H(+)(in) = a quinol + NAD(+) + 4 H(+)(out). Its function is as follows. NDH-1 shuttles electrons from NADH, via FMN and iron-sulfur (Fe-S) centers, to quinones in the respiratory chain. The immediate electron acceptor for the enzyme in this species is believed to be ubiquinone. Couples the redox reaction to proton translocation (for every two electrons transferred, four hydrogen ions are translocated across the cytoplasmic membrane), and thus conserves the redox energy in a proton gradient. This chain is NADH-quinone oxidoreductase subunit K, found in Bordetella petrii (strain ATCC BAA-461 / DSM 12804 / CCUG 43448).